A 33-amino-acid polypeptide reads, in one-letter code: Protamine-1B (33 aa).

The disordered stretch occupies residues 1–33; sequence PRRRRRRSSSRPIRRRRPRRVSRRRRRGGRRRR.

Testis.

The protein resides in the nucleus. It is found in the chromosome. In terms of biological role, protamines substitute for histones in the chromatin of sperm during the haploid phase of spermatogenesis. They compact sperm DNA into a highly condensed, stable and inactive complex. This chain is Protamine-1B, found in Oncorhynchus mykiss (Rainbow trout).